Reading from the N-terminus, the 308-residue chain is Porphobilinogen deaminase (308 aa).

Cys241 is modified (S-(dipyrrolylmethanemethyl)cysteine).

Belongs to the HMBS family. Monomer. The cofactor is dipyrromethane.

The catalysed reaction is 4 porphobilinogen + H2O = hydroxymethylbilane + 4 NH4(+). It functions in the pathway porphyrin-containing compound metabolism; protoporphyrin-IX biosynthesis; coproporphyrinogen-III from 5-aminolevulinate: step 2/4. Tetrapolymerization of the monopyrrole PBG into the hydroxymethylbilane pre-uroporphyrinogen in several discrete steps. This Staphylococcus aureus (strain MRSA252) protein is Porphobilinogen deaminase.